A 1088-amino-acid chain; its full sequence is MATTEDTPASAGPRYAPEDPTLPQPWKGLIDGSTGILYYWNPETNVTQYERPSAPPPHSATTPKLAQIPVPSSGQGHQAQHEQAKPVGHVSQQHGFQQQPQQFPSQHVRPQMMQQHPAQQMPQQSGQQFPQQQSQSMVPHPHGHPSVQTYQPTTQQQQQGMQNQHSQMPQQLSHQYAHSQQHYMGFRPHMQTQGLQNSHQTPQGGPHGQQFPSQQEYNSLAPKREGDEFHGGKKTGFSQPHLPNSERSPSQNTHFEANAASQKTNANLAMAQKCNGPQANAAVTQFQQPGANLIHQQLGPRAPNQMDQTMLHQKSHVSPFQSNNTYENNLQSRPGNDSYVNMRMEVPVRGAQPLHPAAMPKDIRISGGPPTNADPAMGQTGHGTYGHAGPAFPNKSLVRPHFVTSPDVPHLSPVEIYRKQHEVTTTGENIPAPYITFESSGLPPEILRELLSAGFPSPTPIQAQTWPIALQSRDIVAIAKTGSGKTLGYLIPAFILLRHCRNDSRNGPTVLILAPTRELATQIQDEALRFGRSSRISCTCLYGGAPKGPQLKELERGADIVVATPGRLNDILEMKMIDFQQVSLLVLDEADRMLDMGFEPQIRKIVNEIPPRRQTLMYTATWPKEVRKIASDLLVNPVQVNIGRVDELAANKAITQYVEVVPQMEKERRLEQILRSQERGSKVIIFCSTKRLCDHLARSVGRHFGAVVIHGDKTQGERDWVLNQFRSGKSCVLIATDVAARGLDIKDIRVVINYDFPTGVEDYVHRIGRTGRAGATGVAFTFFTEQDWKYAPDLIKVLEGANQQVPPQVRDIAMRGGGGGGPGYSQDRRGMVNRFDSGGGGTRWDSGGGFGGRGGGFSGREGGFGGREGGFGGREGGFGGRGGRFGMRDDSFGRGGNRGRGFTGPDAGHMNVGGRGGFGRFGNNNNMESRGFGRGSGRGFGRGVGRFDNRRGRSRSRSPDLVRPRRRSSSYSRSRSRSGSYSRSRSRSRSWSRSRSRSPRHSRDRGGHNRSRSYSRSPSPVYERRDRAPRVSGFDIKPPVESVVNLDMNAAAAIENVVPTSLSERQGNGVVESEVEAALVRPVVDEEP.

3 disordered regions span residues 1–28 (MATTEDTPASAGPRYAPEDPTLPQPWKG), 47–178 (TQYE…QYAH), and 192–254 (TQGL…QNTH). An N-acetylalanine modification is found at Ala2. The 35-residue stretch at 20-54 (PTLPQPWKGLIDGSTGILYYWNPETNVTQYERPSA) folds into the WW domain. 3 stretches are compositionally biased toward low complexity: residues 87-137 (VGHV…SQSM), 148-171 (QTYQPTTQQQQQGMQNQHSQMPQQ), and 200-215 (QTPQGGPHGQQFPSQQ). Basic and acidic residues predominate over residues 222-231 (PKREGDEFHG). Over residues 236–254 (GFSQPHLPNSERSPSQNTH) the composition is skewed to polar residues. The Q motif signature appears at 435 to 463 (ITFESSGLPPEILRELLSAGFPSPTPIQA). Positions 466–640 (WPIALQSRDI…SDLLVNPVQV (175 aa)) constitute a Helicase ATP-binding domain. 479–486 (AKTGSGKT) lines the ATP pocket. Residues 588–591 (DEAD) carry the DEAD box motif. The region spanning 669–813 (RLEQILRSQE…QVPPQVRDIA (145 aa)) is the Helicase C-terminal domain. Composition is skewed to gly residues over residues 861 to 885 (EGGFGGREGGFGGREGGFGGRGGRF), 893 to 902 (GRGGNRGRGF), 911 to 920 (NVGGRGGFGR), and 932 to 944 (FGRGSGRGFGRGV). The segment at 861–1033 (EGGFGGREGG…RRDRAPRVSG (173 aa)) is disordered. Basic and acidic residues predominate over residues 945-963 (GRFDNRRGRSRSRSPDLVR). Positions 969–983 (SSYSRSRSRSGSYSR) are enriched in low complexity. Basic residues predominate over residues 984-1013 (SRSRSRSWSRSRSRSPRHSRDRGGHNRSRS).

It belongs to the DEAD box helicase family. DDX5/DBP2 subfamily.

Its subcellular location is the nucleus. The catalysed reaction is ATP + H2O = ADP + phosphate + H(+). Its function is as follows. ATP-dependent RNA helicase involved nonsense-mediated mRNA decay and ribosome biogenesis through rRNA processing. This is DEAD-box ATP-dependent RNA helicase 40 (RH40) from Arabidopsis thaliana (Mouse-ear cress).